Here is a 196-residue protein sequence, read N- to C-terminus: Probable thymidylate kinase (196 aa).

Residue 8–15 (GIDASGKT) participates in ATP binding.

This sequence belongs to the thymidylate kinase family.

The enzyme catalyses dTMP + ATP = dTDP + ADP. This chain is Probable thymidylate kinase, found in Metallosphaera sedula (strain ATCC 51363 / DSM 5348 / JCM 9185 / NBRC 15509 / TH2).